The primary structure comprises 283 residues: Probable endonuclease 4 (283 aa).

Zn(2+) contacts are provided by His-69, His-113, Glu-148, Asp-182, His-185, His-217, Asp-230, His-232, and Glu-262.

The protein belongs to the AP endonuclease 2 family. Zn(2+) is required as a cofactor.

The enzyme catalyses Endonucleolytic cleavage to 5'-phosphooligonucleotide end-products.. Its function is as follows. Endonuclease IV plays a role in DNA repair. It cleaves phosphodiester bonds at apurinic or apyrimidinic (AP) sites, generating a 3'-hydroxyl group and a 5'-terminal sugar phosphate. This is Probable endonuclease 4 from Bifidobacterium longum (strain NCC 2705).